A 153-amino-acid polypeptide reads, in one-letter code: 3-hydroxyacyl-[acyl-carrier-protein] dehydratase FabZ (153 aa).

His-54 is an active-site residue.

Belongs to the thioester dehydratase family. FabZ subfamily.

The protein resides in the cytoplasm. It catalyses the reaction a (3R)-hydroxyacyl-[ACP] = a (2E)-enoyl-[ACP] + H2O. In terms of biological role, involved in unsaturated fatty acids biosynthesis. Catalyzes the dehydration of short chain beta-hydroxyacyl-ACPs and long chain saturated and unsaturated beta-hydroxyacyl-ACPs. The polypeptide is 3-hydroxyacyl-[acyl-carrier-protein] dehydratase FabZ (Chlamydia pneumoniae (Chlamydophila pneumoniae)).